Here is a 280-residue protein sequence, read N- to C-terminus: Cell division control protein 2 homolog B (280 aa).

ATP is bound by residues 1–5 and K20; that span reads AYGVV. Residues 1–274 form the Protein kinase domain; the sequence is AYGVVYKARD…AKKALEHEYF (274 aa). Y2 carries the post-translational modification Phosphotyrosine. Residue D114 is the Proton acceptor of the active site. T148 is subject to Phosphothreonine; by CAK.

Belongs to the protein kinase superfamily. CMGC Ser/Thr protein kinase family. CDC2/CDKX subfamily.

It catalyses the reaction L-seryl-[protein] + ATP = O-phospho-L-seryl-[protein] + ADP + H(+). It carries out the reaction L-threonyl-[protein] + ATP = O-phospho-L-threonyl-[protein] + ADP + H(+). The enzyme catalyses [DNA-directed RNA polymerase] + ATP = phospho-[DNA-directed RNA polymerase] + ADP + H(+). Its activity is regulated as follows. Phosphorylation at Tyr-2 inactivates the enzyme, while phosphorylation at Thr-148 activates it. In terms of biological role, plays a key role in the control of the eukaryotic cell cycle. In Antirrhinum majus (Garden snapdragon), this protein is Cell division control protein 2 homolog B (CDC2B).